Consider the following 199-residue polypeptide: 3-isopropylmalate dehydratase small subunit (199 aa).

It belongs to the LeuD family. LeuD type 1 subfamily. Heterodimer of LeuC and LeuD.

The catalysed reaction is (2R,3S)-3-isopropylmalate = (2S)-2-isopropylmalate. It functions in the pathway amino-acid biosynthesis; L-leucine biosynthesis; L-leucine from 3-methyl-2-oxobutanoate: step 2/4. Functionally, catalyzes the isomerization between 2-isopropylmalate and 3-isopropylmalate, via the formation of 2-isopropylmaleate. This Leifsonia xyli subsp. xyli (strain CTCB07) protein is 3-isopropylmalate dehydratase small subunit.